The primary structure comprises 170 residues: ATP synthase subunit b (170 aa).

A helical transmembrane segment spans residues 22–41; the sequence is VLNWAVVVFGLYKFLPGFLG.

It belongs to the ATPase B chain family. As to quaternary structure, F-type ATPases have 2 components, F(1) - the catalytic core - and F(0) - the membrane proton channel. F(1) has five subunits: alpha(3), beta(3), gamma(1), delta(1), epsilon(1). F(0) has four main subunits: a(1), b(1), b'(1) and c(10-14). The alpha and beta chains form an alternating ring which encloses part of the gamma chain. F(1) is attached to F(0) by a central stalk formed by the gamma and epsilon chains, while a peripheral stalk is formed by the delta, b and b' chains.

It localises to the cellular thylakoid membrane. In terms of biological role, f(1)F(0) ATP synthase produces ATP from ADP in the presence of a proton or sodium gradient. F-type ATPases consist of two structural domains, F(1) containing the extramembraneous catalytic core and F(0) containing the membrane proton channel, linked together by a central stalk and a peripheral stalk. During catalysis, ATP synthesis in the catalytic domain of F(1) is coupled via a rotary mechanism of the central stalk subunits to proton translocation. Component of the F(0) channel, it forms part of the peripheral stalk, linking F(1) to F(0). The sequence is that of ATP synthase subunit b from Prochlorococcus marinus subsp. pastoris (strain CCMP1986 / NIES-2087 / MED4).